A 653-amino-acid chain; its full sequence is Chromosomal replication initiator protein DnaA (653 aa).

Positions 1–100 are domain I, interacts with DnaA modulators; that stretch reads MADVPADLAA…SAGEPPASAS (100 aa). Residues 86–310 form a disordered region; it reads ITVDDSAGEP…PAPATGPGEP (225 aa). The tract at residues 101–312 is domain II; it reads PAPPRYEEPE…PATGPGEPTA (212 aa). Composition is skewed to basic and acidic residues over residues 120 to 150 and 221 to 267; these read DPYE…DRHQ and PSYD…RRNI. The span at 284 to 310 shows a compositional bias: low complexity; the sequence is GSALPASSGAPGPLAAQPAPATGPGEP. A domain III, AAA+ region region spans residues 313–529; it reads RLNPKYLFDT…GALIRVTAFA (217 aa). Positions 357, 359, 360, and 361 each coordinate ATP. Positions 530 to 653 are domain IV, binds dsDNA; the sequence is SLNRQPVDLG…TELTNRIKNG (124 aa).

Belongs to the DnaA family. As to quaternary structure, oligomerizes as a right-handed, spiral filament on DNA at oriC.

It localises to the cytoplasm. Plays an essential role in the initiation and regulation of chromosomal replication. ATP-DnaA binds to the origin of replication (oriC) to initiate formation of the DNA replication initiation complex once per cell cycle. Binds the DnaA box (a 9 base pair repeat at the origin) and separates the double-stranded (ds)DNA. Forms a right-handed helical filament on oriC DNA; dsDNA binds to the exterior of the filament while single-stranded (ss)DNA is stabiized in the filament's interior. The ATP-DnaA-oriC complex binds and stabilizes one strand of the AT-rich DNA unwinding element (DUE), permitting loading of DNA polymerase. After initiation quickly degrades to an ADP-DnaA complex that is not apt for DNA replication. Binds acidic phospholipids. The protein is Chromosomal replication initiator protein DnaA of Streptomyces avermitilis (strain ATCC 31267 / DSM 46492 / JCM 5070 / NBRC 14893 / NCIMB 12804 / NRRL 8165 / MA-4680).